The primary structure comprises 388 residues: Nuclear hormone receptor family member nhr-16 (388 aa).

The segment at residues 11 to 86 (FLKCAICQES…VGMNPAGVQQ (76 aa)) is a DNA-binding region (nuclear receptor). 2 NR C4-type zinc fingers span residues 14–34 (CAIC…CRAC) and 50–74 (CQGN…YIKC). Residues 115–387 (PPSSLMLHIP…DEFYNLMSGR (273 aa)) enclose the NR LBD domain.

This sequence belongs to the nuclear hormone receptor family.

Its subcellular location is the nucleus. Its function is as follows. Orphan nuclear receptor. The chain is Nuclear hormone receptor family member nhr-16 (nhr-16) from Caenorhabditis elegans.